The following is a 211-amino-acid chain: Pyridoxine/pyridoxamine 5'-phosphate oxidase (211 aa).

Residues 7-10 and lysine 65 contribute to the substrate site; that span reads RREY. FMN is bound by residues 60–65, 75–76, arginine 81, lysine 82, and glutamine 104; these read RIVLLK and YT. Residues tyrosine 122, arginine 126, and serine 130 each coordinate substrate. FMN contacts are provided by residues 139–140 and tryptophan 184; that span reads QS. Residue 190–192 participates in substrate binding; sequence RLH. Arginine 194 serves as a coordination point for FMN.

Belongs to the pyridoxamine 5'-phosphate oxidase family. As to quaternary structure, homodimer. FMN serves as cofactor.

It catalyses the reaction pyridoxamine 5'-phosphate + O2 + H2O = pyridoxal 5'-phosphate + H2O2 + NH4(+). The enzyme catalyses pyridoxine 5'-phosphate + O2 = pyridoxal 5'-phosphate + H2O2. It functions in the pathway cofactor metabolism; pyridoxal 5'-phosphate salvage; pyridoxal 5'-phosphate from pyridoxamine 5'-phosphate: step 1/1. The protein operates within cofactor metabolism; pyridoxal 5'-phosphate salvage; pyridoxal 5'-phosphate from pyridoxine 5'-phosphate: step 1/1. Its function is as follows. Catalyzes the oxidation of either pyridoxine 5'-phosphate (PNP) or pyridoxamine 5'-phosphate (PMP) into pyridoxal 5'-phosphate (PLP). This is Pyridoxine/pyridoxamine 5'-phosphate oxidase from Photobacterium profundum (strain SS9).